The sequence spans 373 residues: Probable di-N-acetylchitobiase 1 (373 aa).

Positions 1 to 20 (MKIFIIISLILTILIIQSKS) are cleaved as a signal peptide. The GH18 domain occupies 21–369 (KECPCSNVEL…SGMWGALNSF (349 aa)). The N-linked (GlcNAc...) asparagine glycan is linked to Asn48. Chitin is bound by residues 53–54 (PY) and 82–85 (NGVR). An N-linked (GlcNAc...) asparagine glycan is attached at Asn99. Glu127 acts as the Proton donor in catalysis. Chitin contacts are provided by residues Tyr128 and 191–194 (MDYD). N-linked (GlcNAc...) asparagine glycosylation is found at Asn222, Asn250, Asn269, Asn279, and Asn288. A chitin-binding site is contributed by Trp347.

Belongs to the glycosyl hydrolase 18 family.

It is found in the lysosome. Its function is as follows. Involved in the degradation of asparagine-linked glycoproteins. May hydrolyze of N-acetyl-beta-D-glucosamine (1-4)N-acetylglucosamine chitobiose core from the reducing end of the bond. The protein is Probable di-N-acetylchitobiase 1 (ctbs1) of Dictyostelium discoideum (Social amoeba).